A 422-amino-acid polypeptide reads, in one-letter code: L-threonine dehydratase biosynthetic IlvA (422 aa).

An N6-(pyridoxal phosphate)lysine modification is found at Lys-56. Pyridoxal 5'-phosphate is bound by residues Asn-83, 189-193 (GGGGL), and Ser-315. The region spanning 339–413 (HYFILNFPQR…FDKSNIYINE (75 aa)) is the ACT-like domain.

It belongs to the serine/threonine dehydratase family. In terms of assembly, homotetramer. Requires pyridoxal 5'-phosphate as cofactor.

The catalysed reaction is L-threonine = 2-oxobutanoate + NH4(+). The protein operates within amino-acid biosynthesis; L-isoleucine biosynthesis; 2-oxobutanoate from L-threonine: step 1/1. Functionally, catalyzes the anaerobic formation of alpha-ketobutyrate and ammonia from threonine in a two-step reaction. The first step involved a dehydration of threonine and a production of enamine intermediates (aminocrotonate), which tautomerizes to its imine form (iminobutyrate). Both intermediates are unstable and short-lived. The second step is the nonenzymatic hydrolysis of the enamine/imine intermediates to form 2-ketobutyrate and free ammonia. In the low water environment of the cell, the second step is accelerated by RidA. This chain is L-threonine dehydratase biosynthetic IlvA (ilvA), found in Staphylococcus saprophyticus subsp. saprophyticus (strain ATCC 15305 / DSM 20229 / NCIMB 8711 / NCTC 7292 / S-41).